Consider the following 404-residue polypeptide: Keratin, type I cuticular Ha3-I (404 aa).

Residues 1–56 (MSYSCGLPNLSCRTSCSSRPCVPPSCHGCTLPGACNIPANVSNCNWFCEGSFNGSE) are head. Residues 56 to 367 (EKETMQFLND…SLLESEDCKL (312 aa)) enclose the IF rod domain. Positions 57 to 91 (KETMQFLNDRLASYLEKVRQLERDNAELENLIRER) are coil 1A. Residues 92–102 (SQQQEPLVCAS) form a linker 1 region. Positions 103–203 (YQSYFKTIEE…HEQEVNTLRC (101 aa)) are coil 1B. A linker 12 region spans residues 204–219 (QLGGRLNVEVDAAPAV). The coil 2 stretch occupies residues 220–363 (DLNQVLNETR…NTYRSLLESE (144 aa)). The tract at residues 364-404 (DCKLPSNPCAITNACDKSTGPCISNPCGPRARCGPCNTFGY) is tail.

It belongs to the intermediate filament family.

The polypeptide is Keratin, type I cuticular Ha3-I (Pan troglodytes (Chimpanzee)).